The following is an 83-amino-acid chain: Small ribosomal subunit protein uS17 (83 aa).

The protein belongs to the universal ribosomal protein uS17 family. In terms of assembly, part of the 30S ribosomal subunit.

In terms of biological role, one of the primary rRNA binding proteins, it binds specifically to the 5'-end of 16S ribosomal RNA. This chain is Small ribosomal subunit protein uS17, found in Francisella tularensis subsp. holarctica (strain FTNF002-00 / FTA).